A 375-amino-acid chain; its full sequence is Queuine tRNA-ribosyltransferase (375 aa).

The active-site Proton acceptor is the Asp-94. Residues 94–98, Asp-148, Gln-191, and Gly-218 contribute to the substrate site; that span reads DSGGF. Residues 249-255 are RNA binding; the sequence is GVGTPED. The active-site Nucleophile is Asp-268. The segment at 273–277 is RNA binding; important for wobble base 34 recognition; that stretch reads TRIAR. 4 residues coordinate Zn(2+): Cys-306, Cys-308, Cys-311, and His-337.

Belongs to the queuine tRNA-ribosyltransferase family. Homodimer. Within each dimer, one monomer is responsible for RNA recognition and catalysis, while the other monomer binds to the replacement base PreQ1. Requires Zn(2+) as cofactor.

It carries out the reaction 7-aminomethyl-7-carbaguanine + guanosine(34) in tRNA = 7-aminomethyl-7-carbaguanosine(34) in tRNA + guanine. It functions in the pathway tRNA modification; tRNA-queuosine biosynthesis. Functionally, catalyzes the base-exchange of a guanine (G) residue with the queuine precursor 7-aminomethyl-7-deazaguanine (PreQ1) at position 34 (anticodon wobble position) in tRNAs with GU(N) anticodons (tRNA-Asp, -Asn, -His and -Tyr). Catalysis occurs through a double-displacement mechanism. The nucleophile active site attacks the C1' of nucleotide 34 to detach the guanine base from the RNA, forming a covalent enzyme-RNA intermediate. The proton acceptor active site deprotonates the incoming PreQ1, allowing a nucleophilic attack on the C1' of the ribose to form the product. After dissociation, two additional enzymatic reactions on the tRNA convert PreQ1 to queuine (Q), resulting in the hypermodified nucleoside queuosine (7-(((4,5-cis-dihydroxy-2-cyclopenten-1-yl)amino)methyl)-7-deazaguanosine). In Caldanaerobacter subterraneus subsp. tengcongensis (strain DSM 15242 / JCM 11007 / NBRC 100824 / MB4) (Thermoanaerobacter tengcongensis), this protein is Queuine tRNA-ribosyltransferase.